A 103-amino-acid polypeptide reads, in one-letter code: Large ribosomal subunit protein bL21 (103 aa).

The protein belongs to the bacterial ribosomal protein bL21 family. In terms of assembly, part of the 50S ribosomal subunit. Contacts protein L20.

In terms of biological role, this protein binds to 23S rRNA in the presence of protein L20. This chain is Large ribosomal subunit protein bL21, found in Pseudomonas syringae pv. tomato (strain ATCC BAA-871 / DC3000).